The primary structure comprises 252 residues: MLAKRIIPCLDVKEGRVVKGVNFIGLQDVGDPVEIAALYNDAGADEIVFLDITATHEGRKTIIDVVEKTASKVFIPLTVGGGISSVKDMYNLLRAGADKVSINSAAVRNPKLIEEGAQHFGSQCIVVAIDARKVAEGKWNVYVNGGRVDTGMDAIEWAKRVVMLGAGEILLTSMDADGTKNGYDLRLTEEISKSVSVPVIASGGCGHADHIIEVFQKTTVDAALAASIFHYGEVTIGDVKRKLRNANVEVRL.

Active-site residues include D11 and D130.

It belongs to the HisA/HisF family. Heterodimer of HisH and HisF.

It localises to the cytoplasm. The enzyme catalyses 5-[(5-phospho-1-deoxy-D-ribulos-1-ylimino)methylamino]-1-(5-phospho-beta-D-ribosyl)imidazole-4-carboxamide + L-glutamine = D-erythro-1-(imidazol-4-yl)glycerol 3-phosphate + 5-amino-1-(5-phospho-beta-D-ribosyl)imidazole-4-carboxamide + L-glutamate + H(+). It functions in the pathway amino-acid biosynthesis; L-histidine biosynthesis; L-histidine from 5-phospho-alpha-D-ribose 1-diphosphate: step 5/9. In terms of biological role, IGPS catalyzes the conversion of PRFAR and glutamine to IGP, AICAR and glutamate. The HisF subunit catalyzes the cyclization activity that produces IGP and AICAR from PRFAR using the ammonia provided by the HisH subunit. This chain is Imidazole glycerol phosphate synthase subunit HisF, found in Bacillus cereus (strain AH820).